The following is a 110-amino-acid chain: UPF0367 protein sync_2587 (110 aa).

This sequence belongs to the UPF0367 family.

The protein is UPF0367 protein sync_2587 of Synechococcus sp. (strain CC9311).